An 86-amino-acid polypeptide reads, in one-letter code: Small ribosomal subunit protein uS17 (86 aa).

Belongs to the universal ribosomal protein uS17 family. In terms of assembly, part of the 30S ribosomal subunit.

In terms of biological role, one of the primary rRNA binding proteins, it binds specifically to the 5'-end of 16S ribosomal RNA. The protein is Small ribosomal subunit protein uS17 of Roseiflexus sp. (strain RS-1).